Reading from the N-terminus, the 411-residue chain is Dihydrofolate synthase/folylpolyglutamate synthase (411 aa).

53 to 56 is a binding site for ATP; that stretch reads GKGT. Residue Ser77 participates in Mg(2+) binding. Residues 116–119 and 147–149 each bind 7,8-dihydropteroate; these read TYFE and LDA. His167 is a Mg(2+) binding site. Positions 283 and 296 each coordinate ATP.

The protein belongs to the folylpolyglutamate synthase family. As to quaternary structure, monomer. Mg(2+) is required as a cofactor.

It carries out the reaction 7,8-dihydropteroate + L-glutamate + ATP = 7,8-dihydrofolate + ADP + phosphate + H(+). The enzyme catalyses (6S)-5,6,7,8-tetrahydrofolyl-(gamma-L-Glu)(n) + L-glutamate + ATP = (6S)-5,6,7,8-tetrahydrofolyl-(gamma-L-Glu)(n+1) + ADP + phosphate + H(+). The catalysed reaction is 10-formyltetrahydrofolyl-(gamma-L-Glu)(n) + L-glutamate + ATP = 10-formyltetrahydrofolyl-(gamma-L-Glu)(n+1) + ADP + phosphate + H(+). It catalyses the reaction (6R)-5,10-methylenetetrahydrofolyl-(gamma-L-Glu)(n) + L-glutamate + ATP = (6R)-5,10-methylenetetrahydrofolyl-(gamma-L-Glu)(n+1) + ADP + phosphate + H(+). Its pathway is cofactor biosynthesis; tetrahydrofolate biosynthesis; 7,8-dihydrofolate from 2-amino-4-hydroxy-6-hydroxymethyl-7,8-dihydropteridine diphosphate and 4-aminobenzoate: step 2/2. It participates in cofactor biosynthesis; tetrahydrofolylpolyglutamate biosynthesis. Functionally, functions in two distinct reactions of the de novo folate biosynthetic pathway. Catalyzes the addition of a glutamate residue to dihydropteroate (7,8-dihydropteroate or H2Pte) to form dihydrofolate (7,8-dihydrofolate monoglutamate or H2Pte-Glu). Also catalyzes successive additions of L-glutamate to tetrahydrofolate or 10-formyltetrahydrofolate or 5,10-methylenetetrahydrofolate, leading to folylpolyglutamate derivatives. This Buchnera aphidicola subsp. Acyrthosiphon pisum (strain APS) (Acyrthosiphon pisum symbiotic bacterium) protein is Dihydrofolate synthase/folylpolyglutamate synthase (folC).